We begin with the raw amino-acid sequence, 197 residues long: RING-H2 finger protein ATL80 (197 aa).

Residues 30-50 (LVVILAALLCALICVLGLIAV) form a helical membrane-spanning segment. Residues 111–153 (CAICLAEFSAGDELRVLPQCGHGFHVACIDTWLGSHSSCPSCR) form an RING-type; atypical zinc finger. Residues 168–197 (PGSSSSGLESEPEIEIRIKQGEDDPNSFLP) form a disordered region.

It belongs to the RING-type zinc finger family. ATL subfamily.

It localises to the membrane. The catalysed reaction is S-ubiquitinyl-[E2 ubiquitin-conjugating enzyme]-L-cysteine + [acceptor protein]-L-lysine = [E2 ubiquitin-conjugating enzyme]-L-cysteine + N(6)-ubiquitinyl-[acceptor protein]-L-lysine.. The protein operates within protein modification; protein ubiquitination. In terms of biological role, may be involved in the early steps of the plant defense signaling pathway. In Arabidopsis thaliana (Mouse-ear cress), this protein is RING-H2 finger protein ATL80 (ATL80).